The primary structure comprises 459 residues: Ribulose bisphosphate carboxylase large chain (459 aa).

Residue lysine 4 is modified to N6,N6,N6-trimethyllysine. Positions 113 and 163 each coordinate substrate. The Proton acceptor role is filled by lysine 165. Residue lysine 167 participates in substrate binding. Residues lysine 191, aspartate 193, and glutamate 194 each coordinate Mg(2+). Residue lysine 191 is modified to N6-carboxylysine. Histidine 284 functions as the Proton acceptor in the catalytic mechanism. Substrate is bound by residues arginine 285, histidine 317, and serine 369.

The protein belongs to the RuBisCO large chain family. Type I subfamily. In terms of assembly, heterohexadecamer of 8 large chains and 8 small chains; disulfide-linked. The disulfide link is formed within the large subunit homodimers. It depends on Mg(2+) as a cofactor. In terms of processing, the disulfide bond which can form in the large chain dimeric partners within the hexadecamer appears to be associated with oxidative stress and protein turnover.

It is found in the plastid. The protein resides in the chloroplast. The catalysed reaction is 2 (2R)-3-phosphoglycerate + 2 H(+) = D-ribulose 1,5-bisphosphate + CO2 + H2O. It catalyses the reaction D-ribulose 1,5-bisphosphate + O2 = 2-phosphoglycolate + (2R)-3-phosphoglycerate + 2 H(+). In terms of biological role, ruBisCO catalyzes two reactions: the carboxylation of D-ribulose 1,5-bisphosphate, the primary event in carbon dioxide fixation, as well as the oxidative fragmentation of the pentose substrate in the photorespiration process. Both reactions occur simultaneously and in competition at the same active site. The polypeptide is Ribulose bisphosphate carboxylase large chain (Roridula gorgonias (South African fly bush)).